The sequence spans 135 residues: Galectin-1 (135 aa).

Position 2 is an N-acetylalanine (A2). The Galectin domain maps to 4–135 (GLVASNLNLK…DFKIKCVAFD (132 aa)). N6-acetyllysine occurs at positions 13 and 29. S30 bears the Phosphoserine; by FAM20C mark. Residues 45 to 49 (HFNPR), H53, N62, and 69 to 72 (WGTE) each bind a beta-D-galactoside. The residue at position 108 (K108) is an N6-acetyllysine; alternate. K108 carries the post-translational modification N6-succinyllysine; alternate. N6-acetyllysine is present on K128.

As to quaternary structure, homodimer. Binds LGALS3BP. Interacts with CD2, CD3, CD4, CD6, CD7, CD43, ALCAM and CD45. Interacts with laminin (via poly-N-acetyllactosamine). Interacts with SUSD2. Interacts with cargo receptor TMED10; the interaction mediates the translocation from the cytoplasm into the ERGIC (endoplasmic reticulum-Golgi intermediate compartment) and thereby secretion. Interacts with CD69. Expressed in placenta, maternal decidua and fetal membranes. Within placenta, expressed in trophoblasts, stromal cells, villous endothelium, syncytiotrophoblast apical membrane and villous stroma. Within fetal membranes, expressed in amnion, chorioamniotic mesenchyma and chorion (at protein level). Expressed in cardiac, smooth, and skeletal muscle, neurons, thymus, kidney and hematopoietic cells.

The protein localises to the secreted. Its subcellular location is the extracellular space. It localises to the extracellular matrix. It is found in the cytoplasm. Functionally, lectin that binds beta-galactoside and a wide array of complex carbohydrates. Plays a role in regulating apoptosis, cell proliferation and cell differentiation. Inhibits CD45 protein phosphatase activity and therefore the dephosphorylation of Lyn kinase. Strong inducer of T-cell apoptosis. Plays a negative role in Th17 cell differentiation via activation of the receptor CD69. In Homo sapiens (Human), this protein is Galectin-1.